We begin with the raw amino-acid sequence, 190 residues long: Small ribosomal subunit protein eS7x (190 aa).

M1 carries the N-acetylmethionine modification. A coiled-coil region spans residues 17-50 (TECEEQVAQALFDLENTNQELKSELKDLYINQAV).

Belongs to the eukaryotic ribosomal protein eS7 family.

The protein is Small ribosomal subunit protein eS7x (RPS7C) of Arabidopsis thaliana (Mouse-ear cress).